Consider the following 1120-residue polypeptide: DNA-directed RNA polymerase subunit beta (1120 aa).

This sequence belongs to the RNA polymerase beta chain family. In plastids the minimal PEP RNA polymerase catalytic core is composed of four subunits: alpha, beta, beta', and beta''. When a (nuclear-encoded) sigma factor is associated with the core the holoenzyme is formed, which can initiate transcription.

The protein resides in the plastid. The protein localises to the chloroplast. The catalysed reaction is RNA(n) + a ribonucleoside 5'-triphosphate = RNA(n+1) + diphosphate. DNA-dependent RNA polymerase catalyzes the transcription of DNA into RNA using the four ribonucleoside triphosphates as substrates. In Gracilaria tenuistipitata var. liui (Red alga), this protein is DNA-directed RNA polymerase subunit beta.